Reading from the N-terminus, the 237-residue chain is E3 ubiquitin-protein ligase RNF166 (237 aa).

Residues C33–R73 form an RING-type zinc finger. Positions 98, 101, 113, and 117 each coordinate Zn(2+). Residues C98–C117 form a C2HC RNF-type zinc finger. One can recognise a UIM domain in the interval D221–N237.

The protein resides in the cytoplasm. It carries out the reaction S-ubiquitinyl-[E2 ubiquitin-conjugating enzyme]-L-cysteine + [acceptor protein]-L-lysine = [E2 ubiquitin-conjugating enzyme]-L-cysteine + N(6)-ubiquitinyl-[acceptor protein]-L-lysine.. The protein operates within protein modification; protein ubiquitination. E3 ubiquitin-protein ligase that promotes the ubiquitination of different substrates. In turn, participates in different biological processes including interferon production or autophagy. Plays a role in the activation of RNA virus-induced interferon-beta production by promoting the ubiquitination of TRAF3 and TRAF6. Also plays a role in the early recruitment of autophagy adapters to bacteria. Mediates 'Lys-29' and 'Lys-33'-linked ubiquitination of SQSTM1 leading to xenophagic targeting of bacteria and inhibition of their replication. The sequence is that of E3 ubiquitin-protein ligase RNF166 (Rnf166) from Mus musculus (Mouse).